Reading from the N-terminus, the 855-residue chain is MTANKQVRAVLLAALMVFSVFAGSIAFTGTAAAAATSATVSPDTVDKGPSASVDVTVNSGGANDVHVWLDLNDDGYYNASEPNSTDTAAATATLSLSIPESVSAGEYNVSAAESASLTAGTTQQEAYDTLDVVAANPADFNSATHFDDGTPKVEVAFDEAVTVNEMNVTDGETNLSQSVSVSSGQVNVTLSQVYTDDLEVTYNVTDTSGNTATATEDVTFAPIYVANESNNTAYQGSNVAVVASAVDTDVEVEGADDDNNYQFSGSTGPNSQVFVFDTDGKTLDTYQFTVGGAQKAQVDVRDLGLELTVDDLNITTKDGIEGSVSANAGDRTVDIVALDDDGDEVEDTETTVTLNGQGEADFNLSSVDAGEYTIEATDAFTGVTLESDTVTVSKAKDSTGDFASSVINEQVGDVAEITVTLDGTDTGTVTIGDYSLGYSANVTVEDDNDDGEVVLLFNSYAPKKTSSFDVDDSDDEYTVEDITTDIPSGETLDAGDYDLEVATGGEADNVATLVLEDRSTDSVATWTAPTGADLTETEDVYDAIENENLTQTDSLANGDVVVTQVSATGLEGAFDASNFDALSGTQFNLTVEQTNPGPNRDAKVLGINSSSATIIADGDNDTYFIVYDLDDVSASRTDYYDNTSTLYEVEDDDAFNATFTVLEDGDLAEDDESASDEFEVVTPELELDQDEFAVGNAAEQSISGTATVAPGTELTIRVTSDGDTQPRFLKTASVYVQADGTFSSAFDFSEQNLNDTFEVTASVDSGTADDATADGIVGEAMETTTAAETTTTEESTETTTTEESTEEPTETATATEEPTEEATEETTESSTPGFGVVVALVALVAAALLAVRRDN.

An N-terminal signal peptide occupies residues 1-22; the sequence is MTANKQVRAVLLAALMVFSVFA. 19 N-linked (GlcNAc...) asparagine glycosylation sites follow: asparagine 78, asparagine 83, asparagine 108, asparagine 167, asparagine 174, asparagine 187, asparagine 203, asparagine 227, asparagine 230, asparagine 313, asparagine 363, asparagine 441, asparagine 548, asparagine 588, asparagine 608, asparagine 620, asparagine 642, asparagine 656, and asparagine 754. Residues 782 to 802 are compositionally biased toward low complexity; the sequence is ETTTAAETTTTEESTETTTTE. The tract at residues 782-831 is disordered; the sequence is ETTTAAETTTTEESTETTTTEESTEEPTETATATEEPTEEATEETTESST. A compositionally biased stretch (acidic residues) spans 817–827; the sequence is EPTEEATEETT. A helical membrane pass occupies residues 831–851; that stretch reads TPGFGVVVALVALVAAALLAV. A PGF sorting signal motif is present at residues 832–834; it reads PGF.

Belongs to the halobacterial S-layer protein family. Glycosylated. Post-translationally, cleaved by the archaeosortase ArtA at the C-terminus, with removal of a short hydrophobic segment. In terms of processing, lipidation.

It localises to the secreted. The protein resides in the cell wall. It is found in the S-layer. The protein localises to the cell membrane. Functionally, S-layer protein. The S-layer is a paracrystalline mono-layered assembly of proteins which coats the surface of the cell. This chain is Cell surface glycoprotein, found in Haloferax gibbonsii.